We begin with the raw amino-acid sequence, 316 residues long: Methionyl-tRNA formyltransferase (316 aa).

112–115 (SLLP) provides a ligand contact to (6S)-5,6,7,8-tetrahydrofolate.

This sequence belongs to the Fmt family.

The catalysed reaction is L-methionyl-tRNA(fMet) + (6R)-10-formyltetrahydrofolate = N-formyl-L-methionyl-tRNA(fMet) + (6S)-5,6,7,8-tetrahydrofolate + H(+). Attaches a formyl group to the free amino group of methionyl-tRNA(fMet). The formyl group appears to play a dual role in the initiator identity of N-formylmethionyl-tRNA by promoting its recognition by IF2 and preventing the misappropriation of this tRNA by the elongation apparatus. The chain is Methionyl-tRNA formyltransferase from Haemophilus ducreyi (strain 35000HP / ATCC 700724).